Reading from the N-terminus, the 3080-residue chain is Adhesion G-protein coupled receptor G4 (3080 aa).

Residues 1–27 form the signal peptide; sequence MKEHIIYQKLYGLILMSSFIFLSDTLS. Topologically, residues 28 to 2740 are extracellular; it reads LKGKKLDFFG…SRSTVDSVNE (2713 aa). Positions 29–228 constitute a Pentraxin (PTX) domain; it reads KGKKLDFFGR…IPTVDRTLRC (200 aa). 2 disulfides stabilise this stretch: Cys58/Cys123 and Cys200/Cys228. Asp202 lines the Mg(2+) pocket. Residues Asn233, Asn487, Asn836, and Asn899 are each glycosylated (N-linked (GlcNAc...) asparagine). Residues 946-959 are compositionally biased toward polar residues; sequence SEGISAGSPTSGST. Positions 946–965 are disordered; the sequence is SEGISAGSPTSGSTHIFGEP. Asn1020 is a glycosylation site (N-linked (GlcNAc...) asparagine). The interval 1274-1348 is disordered; it reads VTEMSPSKNS…ITPTLTSSNT (75 aa). 3 stretches are compositionally biased toward polar residues: residues 1277–1296, 1305–1315, and 1324–1348; these read MSPS…SLEM, TKISSHQTHSP, and SDGN…SSNT. A glycan (N-linked (GlcNAc...) asparagine) is linked at Asn1519. Residues 2109–2139 are compositionally biased toward polar residues; it reads SRTTITANPRTVSHPSSFSRKTMSPSTTDHT. Residues 2109 to 2141 form a disordered region; sequence SRTTITANPRTVSHPSSFSRKTMSPSTTDHTLS. N-linked (GlcNAc...) asparagine glycosylation is found at Asn2361 and Asn2640. In terms of domain architecture, GAIN-B spans 2578-2734; that stretch reads MAFSIHSYEE…GVLMDLSRST (157 aa). Disulfide bonds link Cys2685–Cys2716 and Cys2704–Cys2718. The tract at residues 2685–2734 is GPS; the sequence is CAFWDFENNNGLGGWNSSGCKVKETNVNYTICQCDHLTHFGVLMDLSRST. The tract at residues 2723-2734 is stachel; the sequence is HFGVLMDLSRST. The helical transmembrane segment at 2741-2766 threads the bilayer; the sequence is QILALITYTGCGISSIFLGVAVVTYI. At 2767–2777 the chain is on the cytoplasmic side; the sequence is AFHKLRKDYPA. A helical transmembrane segment spans residues 2778-2800; it reads KILINLCTALLMLNLVFLINSWL. The Extracellular portion of the chain corresponds to 2801–2806; it reads SSFQKV. Residues 2807–2835 traverse the membrane as a helical segment; sequence GVCITAAVALHYFLLVSFTWMGLEAVHMY. A disulfide bond links Cys2809 and Cys2886. Over 2836–2849 the chain is Cytoplasmic; it reads LALVKVFNIYIPNY. Residues 2850–2870 form a helical membrane-spanning segment; the sequence is ILKFCLVGWGIPAIMVAITVS. Over 2871–2892 the chain is Extracellular; that stretch reads VKKDLYGTLSPTTPFCWIKDDS. The helical transmembrane segment at 2893-2918 threads the bilayer; it reads IFYISVVAYFCLIFLMNLSMFCTVLV. Topologically, residues 2919–2937 are cytoplasmic; it reads QLNSVKSQIQKTRRKMILH. A helical membrane pass occupies residues 2938 to 2961; the sequence is DLKGTMSLTFLLGLTWGFAFFAWG. Residues 2962 to 2965 lie on the Extracellular side of the membrane; that stretch reads PMRN. A helical membrane pass occupies residues 2966–2989; the sequence is FFLYLFAIFNTLQGFFIFVFHCVM. Residues 2990–3080 lie on the Cytoplasmic side of the membrane; that stretch reads KESVREQWQI…FDKDPYCSSP (91 aa). A compositionally biased stretch (polar residues) spans 3051–3065; the sequence is FKSLGSAQGTPSEIS. The segment at 3051–3080 is disordered; sequence FKSLGSAQGTPSEISFPNDDFDKDPYCSSP.

This sequence belongs to the G-protein coupled receptor 2 family. Adhesion G-protein coupled receptor (ADGR) subfamily. As to quaternary structure, homodimer; homodimerizes via its Pentraxin domain in a calcium-independent manner. Heterodimer of 2 chains generated by proteolytic processing; the large extracellular N-terminal fragment and the membrane-bound C-terminal fragment predominantly remain associated and non-covalently linked. Autoproteolytically processed at the GPS region of the GAIN-B domain; this cleavage modulates receptor activity. Post-translationally, N-glycosylated. Detected in fetal retina. Highly expressed in normal enterochromaffin cells and in neuroendocrine carcinoma. Detected in normal liver; highly expressed in primary liver carcinoma.

It localises to the membrane. Its activity is regulated as follows. Forms a heterodimer of 2 chains generated by proteolytic processing that remain associated through non-covalent interactions mediated by the GAIN-B domain. In the inactivated receptor, the Stachel sequence (also named stalk) is embedded in the GAIN-B domain, where it adopts a beta-strand conformation. On activation, the Stachel moves into the 7 transmembrane region and adopts a twisted hook-shaped configuration that forms contacts within the receptor, leading to coupling of a G-alpha protein, which activates signaling. The cleaved GAIN-B and N-terminal domains can then dissociate from the rest of the receptor. Functionally, orphan adhesion G-protein coupled receptor (aGPCR). Ligand binding causes a conformation change that triggers signaling via guanine nucleotide-binding proteins (G proteins) and modulates the activity of downstream effectors, such as adenylate cyclase. ADGRG4 is coupled to G(s) G proteins and mediates activation of adenylate cyclase activity. May be act as sensor of mechanical forces. In Homo sapiens (Human), this protein is Adhesion G-protein coupled receptor G4.